Consider the following 113-residue polypeptide: Large ribosomal subunit protein bL17 (113 aa).

The protein belongs to the bacterial ribosomal protein bL17 family. Part of the 50S ribosomal subunit. Contacts protein L32.

The sequence is that of Large ribosomal subunit protein bL17 from Clostridium kluyveri (strain NBRC 12016).